Consider the following 220-residue polypeptide: Glutathione S-transferase (220 aa).

In terms of domain architecture, GST N-terminal spans 1 to 77; the sequence is MLKLHGFSVS…YIEQTQSGKA (77 aa). Residues tyrosine 12, valine 49, and 61–62 each bind glutathione; that span reads ET. The region spanning 82 to 211 is the GST C-terminal domain; sequence DPFEQAKVRE…ADKEASMPAF (130 aa).

The protein belongs to the GST superfamily. Monomer and homodimer.

It localises to the cytoplasm. The enzyme catalyses RX + glutathione = an S-substituted glutathione + a halide anion + H(+). Functionally, conjugation of reduced glutathione to a wide number of exogenous and endogenous hydrophobic electrophiles. The chain is Glutathione S-transferase from Pseudomonas putida (strain ATCC 700007 / DSM 6899 / JCM 31910 / BCRC 17059 / LMG 24140 / F1).